Here is a 180-residue protein sequence, read N- to C-terminus: Molybdopterin synthase catalytic subunit (180 aa).

Substrate-binding positions include 123 to 124 (HR), Lys-139, and 146 to 148 (KLE). Positions 161–180 (RDGQKGVKVEGGKEGVEAKH) are disordered.

This sequence belongs to the MoaE family. MOCS2B subfamily. As to quaternary structure, heterotetramer; composed of 2 small (MOCS2A) and 2 large (MOCS2B) subunits.

It is found in the cytoplasm. It carries out the reaction 2 [molybdopterin-synthase sulfur-carrier protein]-C-terminal-Gly-aminoethanethioate + cyclic pyranopterin phosphate + H2O = molybdopterin + 2 [molybdopterin-synthase sulfur-carrier protein]-C-terminal Gly-Gly + 2 H(+). It participates in cofactor biosynthesis; molybdopterin biosynthesis. Catalytic subunit of the molybdopterin synthase complex, a complex that catalyzes the conversion of precursor Z into molybdopterin. Acts by mediating the incorporation of 2 sulfur atoms from thiocarboxylated MOCS2A into precursor Z to generate a dithiolene group. In Pyrenophora tritici-repentis (strain Pt-1C-BFP) (Wheat tan spot fungus), this protein is Molybdopterin synthase catalytic subunit.